The chain runs to 138 residues: MNISDVAKKTGLTSKAIRFYEEKGLVTPPLRSENGYRTYTQKHLNELTLLRQARQVGFNLEECGELVNLFNDPRRHSADVKKRTLEKVAEIERHISELQSMRDQLLAMAESCPGDDSADCPIIDNLSGCCHHKAQKLR.

Residues 1-69 enclose the HTH merR-type domain; sequence MNISDVAKKT…LEECGELVNL (69 aa). Positions 4 to 23 form a DNA-binding region, H-T-H motif; that stretch reads SDVAKKTGLTSKAIRFYEEK. C112 and C120 together coordinate Cu(+).

As to quaternary structure, homodimer.

It is found in the cytoplasm. Its function is as follows. Regulates the transcription of the copA and cueO genes. It detects cytoplasmic copper stress and activates transcription in response to increasing copper concentrations. The protein is HTH-type transcriptional regulator CueR (cueR) of Salmonella typhi.